Here is a 157-residue protein sequence, read N- to C-terminus: Protein Smg (157 aa).

Belongs to the Smg family.

This Buchnera aphidicola subsp. Acyrthosiphon pisum (strain Tuc7) protein is Protein Smg.